Reading from the N-terminus, the 83-residue chain is MKVLILIIASVLLIGVECKDGYPKNSEGCKISCVIGNTFCDTECKMLKASSGYCWTLGLACYCEGLPENVEVWDSATNKCGGK.

Residues 1–18 (MKVLILIIASVLLIGVEC) form the signal peptide. The 63-residue stretch at 19–81 (KDGYPKNSEG…VWDSATNKCG (63 aa)) folds into the LCN-type CS-alpha/beta domain. Disulfide bonds link C29-C80, C33-C54, C40-C61, and C44-C63. G81 is subject to Glycine amide.

It belongs to the long (4 C-C) scorpion toxin superfamily. Sodium channel inhibitor family. Beta subfamily. Expressed by the venom gland.

It localises to the secreted. Functionally, beta toxins bind voltage-independently at site-4 of sodium channels (Nav) and shift the voltage of activation toward more negative potentials thereby affecting sodium channel activation and promoting spontaneous and repetitive firing. This Centruroides tecomanus (Scorpion) protein is Beta-toxin Ct25.